We begin with the raw amino-acid sequence, 230 residues long: Mitochondrial fission factor homolog B (230 aa).

Topologically, residues 1 to 210 are cytoplasmic; the sequence is MSGAAFPSPT…ENKERAKREM (210 aa). Residues 117–153 are disordered; sequence EQTSSVSHPSEEVRTQTKTRRERSVSENAGVHHNGPL. The residue at position 142 (S142) is a Phosphoserine. The stretch at 179–210 forms a coiled coil; it reads VDATSLRRQIVKLNRRLQLLEEENKERAKREM. The chain crosses the membrane as a helical; Anchor for type IV membrane protein span at residues 211–228; that stretch reads VMYSITVAFWLVNSWVWF. Residues 229–230 are Extracellular-facing; the sequence is RR.

This sequence belongs to the Tango11 family.

Its subcellular location is the mitochondrion outer membrane. It is found in the peroxisome. Its function is as follows. Plays a role in mitochondrial and peroxisomal fission. Promotes the recruitment and association of the fission mediator dynamin-related protein 1 (DNM1L) to the mitochondrial surface. The protein is Mitochondrial fission factor homolog B of Danio rerio (Zebrafish).